Here is a 212-residue protein sequence, read N- to C-terminus: Pyridoxine/pyridoxamine 5'-phosphate oxidase (212 aa).

Substrate contacts are provided by residues 7–10 (REEY) and K65. FMN contacts are provided by residues 60–65 (RTVLLK), 75–76 (FT), K82, and Q104. Substrate is bound by residues Y122, R126, and S130. FMN contacts are provided by residues 139–140 (QS) and W184. Residue 190–192 (RLH) coordinates substrate. R194 contributes to the FMN binding site.

Belongs to the pyridoxamine 5'-phosphate oxidase family. As to quaternary structure, homodimer. FMN serves as cofactor.

It catalyses the reaction pyridoxamine 5'-phosphate + O2 + H2O = pyridoxal 5'-phosphate + H2O2 + NH4(+). It carries out the reaction pyridoxine 5'-phosphate + O2 = pyridoxal 5'-phosphate + H2O2. It participates in cofactor metabolism; pyridoxal 5'-phosphate salvage; pyridoxal 5'-phosphate from pyridoxamine 5'-phosphate: step 1/1. It functions in the pathway cofactor metabolism; pyridoxal 5'-phosphate salvage; pyridoxal 5'-phosphate from pyridoxine 5'-phosphate: step 1/1. In terms of biological role, catalyzes the oxidation of either pyridoxine 5'-phosphate (PNP) or pyridoxamine 5'-phosphate (PMP) into pyridoxal 5'-phosphate (PLP). This Rippkaea orientalis (strain PCC 8801 / RF-1) (Cyanothece sp. (strain PCC 8801)) protein is Pyridoxine/pyridoxamine 5'-phosphate oxidase.